We begin with the raw amino-acid sequence, 603 residues long: Grainyhead-like protein 3 homolog (603 aa).

Residues 30–95 (EAWKTYLENP…QGKKFYHSMD (66 aa)) are transcription activation. In terms of domain architecture, Grh/CP2 DB spans 226-461 (GLKSDFEYTL…DLETQPVLFI (236 aa)).

Belongs to the grh/CP2 family. Grainyhead subfamily. As to quaternary structure, homodimer, also forms heterodimers with GRHL1 and GRHL2. Interacts with LMO4.

It localises to the nucleus. In terms of biological role, transcription factor playing important roles in primary neurulation and in the differentiation of stratified epithelia of both ectodermal and endodermal origin. Binds directly to the consensus DNA sequence 5'-AACCGGTT-3' acting as an activator and repressor on distinct target genes. Essential for epidermal differentiation and barrier formation at the end of embryogenesis with TGM3 as critical direct target. Exhibits functional redundancy with GRHL2 in epidermal morphogenetic events such as eyelid fusion and epidermal wound repair. Despite being dispensable during normal epidermal homeostasis in the adulthood, is again required for barrier repair after immune-mediated epidermal damage, regulates distinct gene batteries in embryonic epidermal differentiation and adult epidermal barrier reformation after injury. Plays unique and cooperative roles with GRHL2 in establishing distinct zones of primary neurulation. Essential for spinal closure, functions cooperatively with GRHL2 in closure 2 (forebrain/midbrain boundary) and posterior neuropore closure. Also required for proper development of the oral periderm. No genetic interaction with GRHL1, no functional cooperativity due to diverse target gene selectivity. This Mus musculus (Mouse) protein is Grainyhead-like protein 3 homolog.